Reading from the N-terminus, the 131-residue chain is Small ribosomal subunit protein uS8 (131 aa).

The protein belongs to the universal ribosomal protein uS8 family. As to quaternary structure, part of the 30S ribosomal subunit. Contacts proteins S5 and S12.

Functionally, one of the primary rRNA binding proteins, it binds directly to 16S rRNA central domain where it helps coordinate assembly of the platform of the 30S subunit. In Methylobacillus flagellatus (strain ATCC 51484 / DSM 6875 / VKM B-1610 / KT), this protein is Small ribosomal subunit protein uS8.